We begin with the raw amino-acid sequence, 646 residues long: Esterase EstA (646 aa).

An N-terminal signal peptide occupies residues 1 to 24 (MIRMALKPLVAACLLASLSTAPQA). Residues 25-397 (APSPYSTLVV…DSAASGDGNG (373 aa)) are Extracellular-facing. The active-site Nucleophile is the Ser-38. Catalysis depends on residues Asp-310 and His-313. The region spanning 366–646 (QNVGQWRGFV…SVSLALSLDF (281 aa)) is the Autotransporter domain. The chain crosses the membrane as a beta stranded span at residues 398–408 (YNLTLGGSYRI). Residues 409–410 (DE) are Periplasmic-facing. The chain crosses the membrane as a beta stranded span at residues 411–421 (AWRAGVAAGFY). Topologically, residues 422-437 (RQKLEAGAKDSDYRMN) are extracellular. Residues 438–447 (SYMASAFVQY) traverse the membrane as a beta stranded segment. At 448 to 451 (QENR) the chain is on the periplasmic side. The beta stranded transmembrane segment at 452-461 (WWADAALTGG) threads the bilayer. Over 462–488 (YLDYDDLKRKFALGGGERSEKGDTNGH) the chain is Extracellular. Residues 489–500 (LWAFSARLGYDI) form a beta stranded membrane-spanning segment. At 501–507 (AQQADSP) the chain is on the periplasmic side. Residues 508–518 (WHLSPFVSADY) form a beta stranded membrane-spanning segment. At 519–547 (ARVEVDGYSEKGASATALDYDDQKRSSKR) the chain is on the extracellular side. A beta stranded transmembrane segment spans residues 548 to 558 (LGAGLQGKYAF). At 559-561 (GSD) the chain is on the periplasmic side. The beta stranded transmembrane segment at 562–571 (TQLFAEYAHE) threads the bilayer. Residues 572–605 (REYEDDTQDLTMSLNSLPGNRFTLEGYTPQDHLN) lie on the Extracellular side of the membrane. A beta stranded transmembrane segment spans residues 606-615 (RVSLGFSQKL). The Periplasmic segment spans residues 616–618 (APE). A beta stranded membrane pass occupies residues 619 to 628 (LSLRGGYNWR). Topologically, residues 629–636 (KGEDDTQQ) are extracellular. A beta stranded transmembrane segment spans residues 637-646 (SVSLALSLDF).

This sequence belongs to the 'GDSL' lipolytic enzyme family.

Its subcellular location is the cell outer membrane. The enzyme catalyses a carboxylic ester + H2O = an alcohol + a carboxylate + H(+). Esterase whose enzymatic activity is required for rhamnolipid production, all kinds of cell motility (swimming, swarming, and twitching), and biofilm formation; the exact role of EstA in these processes is unclear. In vitro, has pronounced esterase activities towards p-nitrophenyl esters of short acyl chain length (C4-C6) and Tween detergents. Also shows relatively high activity towards beta-naphthyl butyrate, whereas its activities towards triacylglycerols and acyls-CoA are negligible. The polypeptide is Esterase EstA (estA) (Pseudomonas aeruginosa (strain ATCC 15692 / DSM 22644 / CIP 104116 / JCM 14847 / LMG 12228 / 1C / PRS 101 / PAO1)).